We begin with the raw amino-acid sequence, 393 residues long: FAD-dependent monooxygenase dbaB (393 aa).

The signal sequence occupies residues 1 to 23 (MTRTSPTLPVIILGAGMVGLTLA). Positions 37 and 107 each coordinate FAD. N128 carries an N-linked (GlcNAc...) asparagine glycan. Y221 is a catalytic residue. The N-linked (GlcNAc...) asparagine glycan is linked to N233. D320 serves as a coordination point for FAD.

The protein belongs to the paxM FAD-dependent monooxygenase family. FAD is required as a cofactor.

The protein operates within secondary metabolite biosynthesis. Its function is as follows. FAD-dependent monooxygenase; part of the gene cluster that mediates the biosynthesis of the antibiotic 2,4-dihydroxy-3-methyl-6-(2-oxopropyl)benzaldehyde (DHMBA) and its derivatives. The direct non-reducing polyketide synthase dbaI product is 2,4-dihydroxy-3-methyl-6-(2-oxopropyl)benzaldehyde (DHMBA), produced by condensation of one acetyl-CoA starter unit with 4 malonyl-CoA units and one methylation step. The FAD-dependent monooxygenase dbaH is responsible for the synthesis of yellow pigments derived from the oxidation of DHMBA. The roles of dbaB, C, E and F have still to be determined. The chain is FAD-dependent monooxygenase dbaB from Emericella nidulans (strain FGSC A4 / ATCC 38163 / CBS 112.46 / NRRL 194 / M139) (Aspergillus nidulans).